Here is a 240-residue protein sequence, read N- to C-terminus: Terpene cyclase cdmG (240 aa).

Helical transmembrane passes span 16 to 36, 48 to 68, 78 to 98, 112 to 132, 134 to 154, and 167 to 187; these read YASI…LNYG, YGMA…YTVI, IIMT…IKFA, IPFI…ALAA, VGPG…LTIG, and GVSY…VICV. N-linked (GlcNAc...) asparagine glycosylation is present at asparagine 197. The helical transmembrane segment at 205–225 threads the bilayer; the sequence is IMKCFSGISLAVEIVYGVTLW.

It belongs to the paxB family.

It is found in the membrane. It carries out the reaction verruculide C epoxide = 3-hydroxypentacecilide A. It participates in secondary metabolite biosynthesis; terpenoid biosynthesis. Terpene cyclase; part of the gene cluster that mediates the biosynthesis of chrodrimanin B, a meroterpenoid that acts as a potent blocker of insect GABA-gated chloride channels. The first step of the pathway is the biosynthesis of 6-hydroxymellein by the polyketide synthase cdmE. The prenyltransferase cdmH acts as a 6-hydroxymellein 5-farnesyltransferase and produces the hydrophobic metabolite verruculide C. The FAD-dependent monooxygenase cdmI further converts verruculide C into verruculide B. The terpene cyclase cdmG then produced the pentacyclic molecule 3-hydroxypentacecilide A, the backbone structure of chrodrimanin B, via folding the farnesyl moiety of the substrate into the chair-boat conformation. The short-chain dehydrogenase/reductase cdmF functions as the 3-OH dehydrogenase that oxidizes the C-3 hydroxyl group of 3-hydroxypentacecilide A and produces chrodrimanin C, the dehydrogenated product of 3-hydroxypentacecilide A. The cytochrome P450 monooxygenase cdmJ then accepts both 3-hydroxypentacecilide A and chrodrimanin C and functions as a C-7-beta-hydroxylase to produce respectively chrodrimanin H and chrodrimanin F. The dioxygenase cdmA accepts chrodrimanin H to afford chrodrimanin E, which is further transformed to chrodrimanin A by the dioxygenase cdmD. CdmA can also accept chrodrimanin C as substrate to convert it into verruculide A, which is further converted into chrodrimanin T by cdmD. The last step of the biosynthesis is proposed to be performed by the acetyltransferase cdmC which acetylates chrodrimanin A to yield chrodrimanin B. The pathway may also lead to the production of additional shunt products, including chrodrimanins T and U. In Talaromyces verruculosus (Penicillium verruculosum), this protein is Terpene cyclase cdmG.